Consider the following 56-residue polypeptide: Small ribosomal subunit protein uS14 (56 aa).

It belongs to the universal ribosomal protein uS14 family.

This Kluyveromyces lactis (strain ATCC 8585 / CBS 2359 / DSM 70799 / NBRC 1267 / NRRL Y-1140 / WM37) (Yeast) protein is Small ribosomal subunit protein uS14 (RPS29).